A 705-amino-acid chain; its full sequence is Glycogen [starch] synthase isoform 2 (705 aa).

Arginine 20 provides a ligand contact to UDP. Serine 159 is subject to Phosphoserine. UDP-alpha-D-glucose contacts are provided by histidine 193 and arginine 199. Alpha-D-glucose 6-phosphate contacts are provided by histidine 280, glutamate 281, glutamine 283, histidine 286, and lysine 290. Arginine 320 lines the UDP pocket. Arginine 320 is a UDP-alpha-D-glucose binding site. A phosphoserine mark is found at serine 363 and serine 467. Histidine 500 is an alpha-D-glucose 6-phosphate binding site. UDP-alpha-D-glucose is bound by residues glutamate 509, tryptophan 511, and glycine 512. Threonine 514 lines the UDP pocket. Arginine 583 and arginine 587 together coordinate alpha-D-glucose 6-phosphate. At serine 651 the chain carries Phosphoserine. Serine 655 bears the Phosphoserine; by PHO85 mark. Serine 661 and serine 663 each carry phosphoserine; by PKA. Threonine 668 carries the post-translational modification Phosphothreonine; by PHO85. Residues 686-705 form a disordered region; it reads SLGVNPAADDDDDGPYADDS. Positions 693 to 705 are enriched in acidic residues; it reads ADDDDDGPYADDS.

It belongs to the glycosyltransferase 3 family. As to quaternary structure, interacts with PCL10. In terms of processing, phosphorylated by the cyclin-CDK PCL10-PHO85. Phosphorylation causes inactivation of enzyme.

The protein resides in the cytoplasm. It localises to the cytosol. The enzyme catalyses [(1-&gt;4)-alpha-D-glucosyl](n) + UDP-alpha-D-glucose = [(1-&gt;4)-alpha-D-glucosyl](n+1) + UDP + H(+). Its pathway is glycan biosynthesis; glycogen biosynthesis. Its activity is regulated as follows. Allosteric activation by glucose-6-phosphate, and phosphorylation by a cAMP-dependent kinase. Its function is as follows. Glycogen synthase participates in the glycogen biosynthetic process along with glycogenin and glycogen branching enzyme. Extends the primer composed of a few glucose units formed by glycogenin by adding new glucose units to it. In this context, glycogen synthase transfers the glycosyl residue from UDP-Glc to the non-reducing end of alpha-1,4-glucan. This Saccharomyces cerevisiae (strain ATCC 204508 / S288c) (Baker's yeast) protein is Glycogen [starch] synthase isoform 2 (GSY2).